The sequence spans 463 residues: Glycine--tRNA ligase (463 aa).

Residues Arg-98 and Glu-174 each coordinate substrate. ATP contacts are provided by residues 206–208, 216–221, 290–291, and 334–337; these read RNE, FRTREF, EL, and GADR. 221-225 lines the substrate pocket; the sequence is FEQME. Residue 330 to 334 participates in substrate binding; that stretch reads EPSLG.

It belongs to the class-II aminoacyl-tRNA synthetase family. Homodimer.

It is found in the cytoplasm. It catalyses the reaction tRNA(Gly) + glycine + ATP = glycyl-tRNA(Gly) + AMP + diphosphate. Its function is as follows. Catalyzes the attachment of glycine to tRNA(Gly). The sequence is that of Glycine--tRNA ligase from Staphylococcus aureus (strain bovine RF122 / ET3-1).